Consider the following 2057-residue polypeptide: Fer-1-like protein 5 (2057 aa).

C2 domains are found at residues 1–99 (MLRL…VLFV), 152–265 (PGST…TLLR), 308–425 (DDTD…EGVY), 1057–1188 (DTRP…MRWH), 1213–1346 (KLGE…AQDY), 1467–1587 (PKPP…AHCG), and 1705–1853 (GPPG…KQCS). Residues D1502, D1508, D1557, F1558, D1559, S1562, D1565, D1824, S1827, and D1830 each coordinate Ca(2+). A helical transmembrane segment spans residues 1962–1982 (LIAFMVISIIALMLFNFIYSA).

Belongs to the ferlin family. In terms of assembly, interacts (via second C2 domain) with EHD1 and EHD2. Ca(2+) is required as a cofactor.

The protein resides in the cell membrane. Its subcellular location is the membrane. Functionally, plays a role in myoblast fusion; probable mediator of endocytic recycling for membrane trafficking events during myotube formation. The polypeptide is Fer-1-like protein 5 (FER1L5) (Homo sapiens (Human)).